The primary structure comprises 130 residues: Glycine cleavage system H protein (130 aa).

A Lipoyl-binding domain is found at 25-106; it reads TALIGISDFA…PFDSWMIKVK (82 aa). N6-lipoyllysine is present on K66.

Belongs to the GcvH family. As to quaternary structure, the glycine cleavage system is composed of four proteins: P, T, L and H. (R)-lipoate is required as a cofactor.

In terms of biological role, the glycine cleavage system catalyzes the degradation of glycine. The H protein shuttles the methylamine group of glycine from the P protein to the T protein. This chain is Glycine cleavage system H protein, found in Leptospira borgpetersenii serovar Hardjo-bovis (strain JB197).